Reading from the N-terminus, the 170-residue chain is Sec-independent protein translocase protein TatB (170 aa).

Residues M1–G21 form a helical membrane-spanning segment. The interval A69–L170 is disordered. Over residues V73–E93 the composition is skewed to polar residues. Residues H128–R137 show a composition bias toward basic residues.

It belongs to the TatB family. In terms of assembly, the Tat system comprises two distinct complexes: a TatABC complex, containing multiple copies of TatA, TatB and TatC subunits, and a separate TatA complex, containing only TatA subunits. Substrates initially bind to the TatABC complex, which probably triggers association of the separate TatA complex to form the active translocon.

It localises to the cell inner membrane. In terms of biological role, part of the twin-arginine translocation (Tat) system that transports large folded proteins containing a characteristic twin-arginine motif in their signal peptide across membranes. Together with TatC, TatB is part of a receptor directly interacting with Tat signal peptides. TatB may form an oligomeric binding site that transiently accommodates folded Tat precursor proteins before their translocation. The protein is Sec-independent protein translocase protein TatB of Methylibium petroleiphilum (strain ATCC BAA-1232 / LMG 22953 / PM1).